Here is a 258-residue protein sequence, read N- to C-terminus: 6-carboxyhexanoate--CoA ligase (258 aa).

This sequence belongs to the BioW family. In terms of assembly, homodimer. Mg(2+) serves as cofactor.

The catalysed reaction is heptanedioate + ATP + CoA = 6-carboxyhexanoyl-CoA + AMP + diphosphate. Its pathway is metabolic intermediate metabolism; pimeloyl-CoA biosynthesis; pimeloyl-CoA from pimelate: step 1/1. Its function is as follows. Catalyzes the transformation of pimelate into pimeloyl-CoA with concomitant hydrolysis of ATP to AMP. The polypeptide is 6-carboxyhexanoate--CoA ligase (Bacillus spizizenii (strain ATCC 23059 / NRRL B-14472 / W23) (Bacillus subtilis subsp. spizizenii)).